The primary structure comprises 1306 residues: Synergin gamma (1306 aa).

The stretch at 113–153 (MQKQFAEEQQKRFEQQQKLLEEERKRRQFEEQKQKLRLLSS) forms a coiled coil. Disordered regions lie at residues 176-196 (GFSR…KQGP) and 252-285 (SGPA…PAQS). Positions 258–272 (EAEKTSDQTLSKEES) are enriched in basic and acidic residues. Positions 293-404 (NESLVPDAYK…TPVSQPTAMP (112 aa)) constitute an EH domain. A DFXDF motif 1 motif is present at residues 455–459 (DFQDF). The segment at 460 to 494 (QDASKSGSIDDSFTDFQEMPASSKTSNSQHGNSAP) is disordered. S471 is modified (phosphoserine). Residue K509 is modified to N6-acetyllysine. Positions 514–778 (KGISTDKPSE…ADFHSSKFSS (265 aa)) are interaction with AP1G1. The interval 559–601 (STGTDDGFTDFKTADSVSPLEPPTKDTFPSAFASGAAQQTQTQ) is disordered. At S576 the chain carries Phosphoserine. Positions 661–673 (LADDFGEFNLFGE) are interaction with AP1G1, AP1G2 and GGA1. Positions 685 to 689 (DFADF) match the DFXDF motif 2 motif. The interval 697-730 (ISSEPKASDKYEALREEVSPSPLSSSTVEGAQHP) is disordered. Positions 702–714 (KASDKYEALREEV) are enriched in basic and acidic residues. S715 carries the post-translational modification Phosphoserine. Position 736 is an N6-acetyllysine (K736). S744 and S764 each carry phosphoserine. The DFXDF motif 3 signature appears at 767–771 (DFADF). S804, S844, S847, S901, S911, S927, S974, S998, S1065, S1067, S1079, and S1090 each carry phosphoserine. Disordered stretches follow at residues 986-1016 (PTVD…ADDF) and 1065-1090 (SLSL…RDRS). Residues 993 to 1005 (ETSCPSPASSVAS) are compositionally biased toward polar residues. T1092 bears the Phosphothreonine mark.

In terms of assembly, self-associates. Interacts with GGA1 (via GAE domain). Interacts with GGA2 and GGA3. Interacts with AP1G1 (via GAE domain), a subunit of adapter protein complex AP-1. Interacts with AP1G2 (via GAE domain) a subunit of adapter protein complex AP-1. Component of the aftiphilin/p200/gamma-synergin complex, at least composed of AFTPH/aftiphilin, HEATR5B/p200a and SYNRG/gamma-synergin, which plays a role in the AP1G1/AP-1-mediated trafficking of transferrin from early to recycling endosomes. Within the complex interacts with AFTPH/aftiphilin and HEATR5B/p200a; the interactions are direct. Interacts (via EH domain) with SCAMP1.

It is found in the cytoplasm. The protein localises to the cytosol. The protein resides in the golgi apparatus. It localises to the trans-Golgi network membrane. Its subcellular location is the perinuclear region. It is found in the cytoplasmic vesicle. The protein localises to the clathrin-coated vesicle. In terms of biological role, plays a role in endocytosis and/or membrane trafficking at the trans-Golgi network (TGN). May act by linking the adapter protein complex AP-1 to other proteins. Component of clathrin-coated vesicles. Component of the aftiphilin/p200/gamma-synergin complex, which plays roles in AP1G1/AP-1-mediated protein trafficking including the trafficking of transferrin from early to recycling endosomes, and the membrane trafficking of furin and the lysosomal enzyme cathepsin D between the trans-Golgi network (TGN) and endosomes. The chain is Synergin gamma (Synrg) from Mus musculus (Mouse).